A 564-amino-acid polypeptide reads, in one-letter code: Rhodopsin kinase GRK1 (564 aa).

Residues Met-1–Phe-15 form an interaction with RCVRN region. The N-terminal stretch occupies residues Met-1–Trp-189. Ser-5 is modified (phosphoserine). At Thr-8 the chain carries Phosphothreonine. The residue at position 21 (Ser-21) is a Phosphoserine; by PKA and autocatalysis. The RGS domain maps to Phe-58 to Leu-175. A Protein kinase domain is found at Phe-190–Phe-455. ATP-binding positions include Leu-196–Val-204 and Lys-219. Residue Asp-317 is the Proton acceptor of the active site. The AGC-kinase C-terminal domain maps to Lys-456–Glu-521. The interval Lys-456 to Ser-564 is C-terminal. Ser-491 carries the phosphoserine; by autocatalysis modification. Position 492 is a phosphothreonine; by autocatalysis (Thr-492). A Cysteine methyl ester modification is found at Cys-561. A lipid anchor (S-farnesyl cysteine) is attached at Cys-561. The propeptide at Leu-562 to Ser-564 is removed in mature form.

This sequence belongs to the protein kinase superfamily. AGC Ser/Thr protein kinase family. GPRK subfamily. In terms of assembly, interacts (via N-terminus) with RCVRN (via C-terminus); the interaction is Ca(2+)-dependent. Interacts (when prenylated) with PDE6D; this promotes release from membranes. May form a complex composed of RHO, GRK1 and RCVRN in a Ca(2+)-dependent manner; RCVRN prevents the interaction between GRK1 and RHO. Autophosphorylated, Ser-21 is a minor site of autophosphorylation compared to Ser-491 and Thr-492. Phosphorylation at Ser-21 is regulated by light and activated by cAMP. In terms of processing, farnesylation is required for full activity. As to expression, detected in retina (at protein level). Retina-specific. Expressed in rod and cone photoreceptor cells.

It is found in the membrane. Its subcellular location is the cell projection. The protein resides in the cilium. The protein localises to the photoreceptor outer segment. The enzyme catalyses L-threonyl-[rhodopsin] + ATP = O-phospho-L-threonyl-[rhodopsin] + ADP + H(+). It carries out the reaction L-seryl-[rhodopsin] + ATP = O-phospho-L-seryl-[rhodopsin] + ADP + H(+). Inhibited by RCVRN, which prevents the interaction between GRK1 and RHO. Inhibition is calcium-dependent. In terms of biological role, retina-specific kinase involved in the signal turnoff via phosphorylation of rhodopsin (RHO), the G protein- coupled receptor that initiates the phototransduction cascade. This rapid desensitization is essential for scotopic vision and permits rapid adaptation to changes in illumination. May play a role in the maintenance of the outer nuclear layer in the retina. This Rattus norvegicus (Rat) protein is Rhodopsin kinase GRK1.